Consider the following 445-residue polypeptide: Enolase 2 (445 aa).

The substrate site is built by H164 and E173. The active-site Proton donor is E216. 3 residues coordinate Mg(2+): D251, E301, and D328. E301 and D328 together coordinate substrate. The Proton acceptor role is filled by K353. Residues 380 to 383 (SHRS) and K404 each bind substrate.

The protein belongs to the enolase family. As to quaternary structure, homodimer. The cofactor is Mg(2+).

It localises to the cytoplasm. The enzyme catalyses (2R)-2-phosphoglycerate = phosphoenolpyruvate + H2O. The protein operates within carbohydrate degradation; glycolysis; pyruvate from D-glyceraldehyde 3-phosphate: step 4/5. In Hevea brasiliensis (Para rubber tree), this protein is Enolase 2 (ENO2).